The sequence spans 310 residues: Ribose-phosphate pyrophosphokinase (310 aa).

Residues Asp-33–Glu-35 and Arg-92–Gln-93 each bind ATP. Mg(2+) is bound by residues His-127 and Asp-166. Residue Lys-189 is part of the active site. Residues Arg-191, Asp-215, and Asp-219–Thr-223 contribute to the D-ribose 5-phosphate site.

This sequence belongs to the ribose-phosphate pyrophosphokinase family. Class I subfamily. As to quaternary structure, homohexamer. It depends on Mg(2+) as a cofactor.

It localises to the cytoplasm. The catalysed reaction is D-ribose 5-phosphate + ATP = 5-phospho-alpha-D-ribose 1-diphosphate + AMP + H(+). Its pathway is metabolic intermediate biosynthesis; 5-phospho-alpha-D-ribose 1-diphosphate biosynthesis; 5-phospho-alpha-D-ribose 1-diphosphate from D-ribose 5-phosphate (route I): step 1/1. In terms of biological role, involved in the biosynthesis of the central metabolite phospho-alpha-D-ribosyl-1-pyrophosphate (PRPP) via the transfer of pyrophosphoryl group from ATP to 1-hydroxyl of ribose-5-phosphate (Rib-5-P). This is Ribose-phosphate pyrophosphokinase from Bordetella parapertussis (strain 12822 / ATCC BAA-587 / NCTC 13253).